The sequence spans 1053 residues: MITNSKMENKILDEFDEEELNKLKINSNNKESTTTTTSTTTTTTTTTSTSGEESDDEHTGSSSSTAAMELHRYKISQECPVDFEDDYDEESSSFDEEDEDSAAESNGGNGKLIPNPNDKKKKRSSKSSSKSSKSKSKSKNKETTANPVQNCQLMESGTLFSPTEFVKSSTVNPSKSPVQPIKLSSMLGLSELGTSNVLTVQNPQPISEPLKNDISSGSSSSSSSNNNNSNSNSNGNCNSDSTKSKFTSLNSWDAPPLANVLPDPSYCQDIVDSENNFIVPSVKHTILDVDNLFNNLIQNTNNNNNNDFKSSTMIGKPFSSGGDGSTSPLISGLSSSSIIPNGNGSLAEQQQQQQQSIPESEIPIDIKVLQLSGSRMFFNRELSELIYFYRILYEAYNPTYPILERVRFIAITSQNLDMYFCKRALKLRLGYISTRKTLKPEEHYINMVLNTTRNLINEIYNIYMNILAPELSNNNVFIIKYSDLTEPEKIQLRGFFLQHVFPLMTPLVVDAGHPFPNLSNLSLNIAVLLKHDEDTTRFVRIKVPQRIPRFVHIKQRSNYSIIPMEEIILANLDTLFPNTKILTKSLFRVSRHNDLKLSGEDQANDLLELIKTELHKRKFAPMVRLEVSHNMPAEILDMLKTQLALDAYDVYVINGPLGLQDLFELCKLNLPHLKFQPWVPHIPSRLVNLAKYPSEDVFSVIRKGELLVNLPYLSFNSSVQFFIESAVKDPKVLAIKIAIYRTNSNSQLIRALCEAASHKEVMVLVDLKASGDEEQNTKFARLLEQAGCHVSYGLVGLKTHAKIAMVVREEENGLREYLNISTGNYNASTSDVYADICLFSCDPDLGEDMCNLFNYLTGYSRVSSFKKLLIAPMNMRSTLIQLIDNEAKNAREGKDATINAVMNGLDDKRLVNALYQASIAGVKITLVVRGRCRILPGIKGISENIKVISILGRFLEHSRIYCFHNNGKPKAYIASADWLHRNLKRRVEVMVPVDDANNIKQLYEIINVYCNDSNAWEMLSDGRYKKRSSPIDEDSQTQFMNQTNQKHPVIWSK.

Disordered regions lie at residues 23-155, 200-245, and 302-328; these read LKIN…QLME, VQNP…TKSK, and NNNNNDFKSSTMIGKPFSSGGDGSTSP. Residues 32–50 show a composition bias toward low complexity; sequence STTTTTSTTTTTTTTTSTS. Residues 81-102 are compositionally biased toward acidic residues; sequence VDFEDDYDEESSSFDEEDEDSA. Over residues 143-155 the composition is skewed to polar residues; it reads TTANPVQNCQLME. Low complexity predominate over residues 215–239; it reads SSGSSSSSSSNNNNSNSNSNGNCNS. The Phosphohistidine intermediate role is filled by histidine 800. The segment at 1027–1053 is disordered; it reads RSSPIDEDSQTQFMNQTNQKHPVIWSK. Residues 1036–1046 are compositionally biased toward polar residues; that stretch reads QTQFMNQTNQK.

The protein belongs to the polyphosphate kinase 1 (PPK1) family. Hexamer. May form higher oligomeric structures in the presence of ATP.

The protein localises to the vesicle. It catalyses the reaction [phosphate](n) + ATP = [phosphate](n+1) + ADP. Catalyzes the reversible transfer of the terminal phosphate of ATP to form a long-chain polyphosphate (polyP). Produces polyP in a broad range of chain lengths (50-300 Pi residues). Involved in development (growth and fruiting body formation), sporulation, phagocytosis, cell division and the late stages of cytokinesis. The chain is Polyphosphate kinase (ppkA) from Dictyostelium discoideum (Social amoeba).